The sequence spans 254 residues: Phosphatidylglycerol--prolipoprotein diacylglyceryl transferase (254 aa).

4 consecutive transmembrane segments (helical) span residues 11 to 31, 49 to 69, 84 to 104, and 109 to 129; these read LAIR…LLLA, FLIA…IFEF, QGGL…YIYL, and ESFF…QAIG. Arg130 lines the a 1,2-diacyl-sn-glycero-3-phospho-(1'-sn-glycerol) pocket. A run of 3 helical transmembrane segments spans residues 169–189, 196–216, and 228–248; these read PTFL…VYLL, GIVF…IEGL, and VAQL…YNII.

This sequence belongs to the Lgt family.

It is found in the cell membrane. It catalyses the reaction L-cysteinyl-[prolipoprotein] + a 1,2-diacyl-sn-glycero-3-phospho-(1'-sn-glycerol) = an S-1,2-diacyl-sn-glyceryl-L-cysteinyl-[prolipoprotein] + sn-glycerol 1-phosphate + H(+). It functions in the pathway protein modification; lipoprotein biosynthesis (diacylglyceryl transfer). In terms of biological role, catalyzes the transfer of the diacylglyceryl group from phosphatidylglycerol to the sulfhydryl group of the N-terminal cysteine of a prolipoprotein, the first step in the formation of mature lipoproteins. The polypeptide is Phosphatidylglycerol--prolipoprotein diacylglyceryl transferase (Clostridium botulinum (strain Langeland / NCTC 10281 / Type F)).